We begin with the raw amino-acid sequence, 113 residues long: Probable mesentericin-Y105 immunity protein (113 aa).

It belongs to the immunity protein EntA family.

Imparts immunity to mesentericin-Y105 to naturally sensitive host strains. In Leuconostoc mesenteroides, this protein is Probable mesentericin-Y105 immunity protein (mesI).